A 241-amino-acid chain; its full sequence is Ribosomal RNA small subunit methyltransferase G (241 aa).

S-adenosyl-L-methionine contacts are provided by residues G79, F84, 130–131 (AE), and R150.

It belongs to the methyltransferase superfamily. RNA methyltransferase RsmG family.

It localises to the cytoplasm. Functionally, specifically methylates the N7 position of a guanine in 16S rRNA. The polypeptide is Ribosomal RNA small subunit methyltransferase G (Ligilactobacillus salivarius (strain UCC118) (Lactobacillus salivarius)).